Reading from the N-terminus, the 324-residue chain is Carbonic anhydrase, chloroplastic (324 aa).

It belongs to the beta-class carbonic anhydrase family. As to quaternary structure, homohexamer.

It is found in the plastid. Its subcellular location is the chloroplast stroma. It catalyses the reaction hydrogencarbonate + H(+) = CO2 + H2O. Functionally, reversible hydration of carbon dioxide. The chain is Carbonic anhydrase, chloroplastic from Hordeum vulgare (Barley).